The chain runs to 188 residues: Elongation factor P (188 aa).

Lys34 is modified (N6-(3,6-diaminohexanoyl)-5-hydroxylysine).

It belongs to the elongation factor P family. Post-translationally, may be beta-lysylated on the epsilon-amino group of Lys-34 by the combined action of EpmA and EpmB, and then hydroxylated on the C5 position of the same residue by EpmC (if this protein is present). Lysylation is critical for the stimulatory effect of EF-P on peptide-bond formation. The lysylation moiety may extend toward the peptidyltransferase center and stabilize the terminal 3-CCA end of the tRNA. Hydroxylation of the C5 position on Lys-34 may allow additional potential stabilizing hydrogen-bond interactions with the P-tRNA.

It localises to the cytoplasm. The protein operates within protein biosynthesis; polypeptide chain elongation. In terms of biological role, involved in peptide bond synthesis. Alleviates ribosome stalling that occurs when 3 or more consecutive Pro residues or the sequence PPG is present in a protein, possibly by augmenting the peptidyl transferase activity of the ribosome. Modification of Lys-34 is required for alleviation. The protein is Elongation factor P of Haemophilus influenzae (strain 86-028NP).